Reading from the N-terminus, the 59-residue chain is uncharacterized protein (59 aa).

Its subcellular location is the mitochondrion. This is an uncharacterized protein from Ascobolus immersus.